The primary structure comprises 161 residues: Nucleotide-binding protein H16_A3060 (161 aa).

This sequence belongs to the YajQ family.

Functionally, nucleotide-binding protein. This Cupriavidus necator (strain ATCC 17699 / DSM 428 / KCTC 22496 / NCIMB 10442 / H16 / Stanier 337) (Ralstonia eutropha) protein is Nucleotide-binding protein H16_A3060.